The primary structure comprises 218 residues: Ribonuclease S-7 (218 aa).

Residues 1–22 (MLNSPLTSVLFVLLFVLSPIYG) form the signal peptide. An RNA-binding site is contributed by Gln-32. Cys-38 and Cys-43 are oxidised to a cystine. An N-linked (GlcNAc...) asparagine glycan is attached at Asn-49. His-53 contributes to the RNA binding site. His-53 serves as the catalytic Proton donor. A glycan (N-linked (GlcNAc...) asparagine) is linked at Asn-59. Cys-67 and Cys-116 are joined by a disulfide. RNA contacts are provided by residues 91 to 92 (DL), Phe-105, 108 to 109 (HE), and 112 to 113 (KH). Glu-109 is a catalytic residue. His-113 functions as the Proton acceptor in the catalytic mechanism. A glycan (N-linked (GlcNAc...) asparagine) is linked at Asn-162. 2 cysteine pairs are disulfide-bonded: Cys-177–Cys-207 and Cys-190–Cys-201.

The protein belongs to the RNase T2 family.

The protein resides in the secreted. It is found in the extracellular space. It catalyses the reaction a ribonucleotidyl-ribonucleotide-RNA + H2O = a 3'-end 3'-phospho-ribonucleotide-RNA + a 5'-end dephospho-ribonucleoside-RNA + H(+). In terms of biological role, self-incompatibility (SI) is the inherited ability of a flowering plant to prevent self-fertilization by discriminating between self and non-self pollen during pollination. In many species of the Solanaceae, self-incompatibility is controlled by the single, multiallelic locus S. This stylar glycoprotein is associated with expression of self-incompatibility in potato. The chain is Ribonuclease S-7 from Nicotiana alata (Winged tobacco).